Here is a 279-residue protein sequence, read N- to C-terminus: Large ribosomal subunit protein uL2 (279 aa).

Disordered regions lie at residues 29–59 and 224–279; these read PEKS…GGHK and VAMN…KNKR. The segment covering 50–59 has biased composition (basic residues); that stretch reads TTRHKGGGHK. A compositionally biased stretch (basic and acidic residues) spans 253–268; it reads PEGRTRRPNKESDKLI. A compositionally biased stretch (basic residues) spans 269–279; sequence VRRRRTGKNKR.

It belongs to the universal ribosomal protein uL2 family. Part of the 50S ribosomal subunit. Forms a bridge to the 30S subunit in the 70S ribosome.

One of the primary rRNA binding proteins. Required for association of the 30S and 50S subunits to form the 70S ribosome, for tRNA binding and peptide bond formation. It has been suggested to have peptidyltransferase activity; this is somewhat controversial. Makes several contacts with the 16S rRNA in the 70S ribosome. The chain is Large ribosomal subunit protein uL2 from Paenarthrobacter aurescens (strain TC1).